The primary structure comprises 470 residues: Neuraminidase (470 aa).

The Intravirion segment spans residues 1–14 (MNPNQKIIAIGSAS). The tract at residues 11 to 32 (GSASLGILILNVILHVVSIIVT) is involved in apical transport and lipid raft association. A helical transmembrane segment spans residues 15 to 35 (LGILILNVILHVVSIIVTVLV). Residues 32-86 (TVLVLNNNGTGLNCNGTIIREYNETVRVERITQWYNTNTIEYIERPSNEYYMNNT) are hypervariable stalk region. Topologically, residues 36-470 (LNNNGTGLNC…AILPFDIDKI (435 aa)) are virion surface. Asn39, Asn46, Asn54, and Asn84 each carry an N-linked (GlcNAc...) asparagine; by host glycan. Residues 89–470 (LCEAQGFAPF…AILPFDIDKI (382 aa)) form a head of neuraminidase region. Disulfide bonds link Cys90–Cys417, Cys122–Cys127, Cys182–Cys229, Cys231–Cys236, Cys277–Cys290, Cys279–Cys288, Cys316–Cys335, and Cys421–Cys446. Arg116 lines the substrate pocket. Asn144 carries an N-linked (GlcNAc...) asparagine; by host glycan. Asp149 (proton donor/acceptor) is an active-site residue. Arg150 is a binding site for substrate. 275 to 276 (EE) is a binding site for substrate. Arg291 contacts substrate. Asp292 is a binding site for Ca(2+). Residue Asn293 is glycosylated (N-linked (GlcNAc...) asparagine; by host). Residues Gly296 and Asp322 each coordinate Ca(2+). Arg368 contacts substrate. N-linked (GlcNAc...) asparagine; by host glycosylation occurs at Asn398. The active-site Nucleophile is the Tyr402.

It belongs to the glycosyl hydrolase 34 family. As to quaternary structure, homotetramer. The cofactor is Ca(2+). In terms of processing, N-glycosylated.

It localises to the virion membrane. Its subcellular location is the host apical cell membrane. It catalyses the reaction Hydrolysis of alpha-(2-&gt;3)-, alpha-(2-&gt;6)-, alpha-(2-&gt;8)- glycosidic linkages of terminal sialic acid residues in oligosaccharides, glycoproteins, glycolipids, colominic acid and synthetic substrates.. Its activity is regulated as follows. Inhibited by the neuraminidase inhibitors zanamivir (Relenza) and oseltamivir (Tamiflu). These drugs interfere with the release of progeny virus from infected cells and are effective against all influenza strains. Resistance to neuraminidase inhibitors is quite rare. Catalyzes the removal of terminal sialic acid residues from viral and cellular glycoconjugates. Cleaves off the terminal sialic acids on the glycosylated HA during virus budding to facilitate virus release. Additionally helps virus spread through the circulation by further removing sialic acids from the cell surface. These cleavages prevent self-aggregation and ensure the efficient spread of the progeny virus from cell to cell. Otherwise, infection would be limited to one round of replication. Described as a receptor-destroying enzyme because it cleaves a terminal sialic acid from the cellular receptors. May facilitate viral invasion of the upper airways by cleaving the sialic acid moieties on the mucin of the airway epithelial cells. Likely to plays a role in the budding process through its association with lipid rafts during intracellular transport. May additionally display a raft-association independent effect on budding. Plays a role in the determination of host range restriction on replication and virulence. Sialidase activity in late endosome/lysosome traffic seems to enhance virus replication. The chain is Neuraminidase from Influenza A virus (strain A/Equine/Kentucky/1/1981).